The sequence spans 329 residues: Phosphate acyltransferase (329 aa).

This sequence belongs to the PlsX family. In terms of assembly, homodimer. Probably interacts with PlsY.

The protein resides in the cytoplasm. It carries out the reaction a fatty acyl-[ACP] + phosphate = an acyl phosphate + holo-[ACP]. Its pathway is lipid metabolism; phospholipid metabolism. In terms of biological role, catalyzes the reversible formation of acyl-phosphate (acyl-PO(4)) from acyl-[acyl-carrier-protein] (acyl-ACP). This enzyme utilizes acyl-ACP as fatty acyl donor, but not acyl-CoA. The sequence is that of Phosphate acyltransferase from Campylobacter concisus (strain 13826).